We begin with the raw amino-acid sequence, 197 residues long: Heart- and neural crest derivatives-expressed protein 1 (197 aa).

2 disordered regions span residues 61–94 and 155–184; these read VVGPSQTSGRIENLGGKLGRRKGAPPKKERRRTE and VDGKRRREPQPTEGYWGAAPAGEKKLKGRT. Positions 78–90 are enriched in basic residues; it reads LGRRKGAPPKKER. The bHLH domain occupies 80 to 132; the sequence is RRKGAPPKKERRRTESINSAFAELRECIPNVPADTKLSKIKTLRLATSYIGYL.

In terms of assembly, efficient DNA binding requires dimerization with another bHLH protein. Highly expressed in the adult heart and expressed at lower levels in the intestine and gall bladder.

The protein localises to the nucleus. It localises to the nucleolus. Its function is as follows. Plays an essential role in cardiac morphogenesis. The protein is Heart- and neural crest derivatives-expressed protein 1 (hand1) of Xenopus laevis (African clawed frog).